We begin with the raw amino-acid sequence, 214 residues long: MSDYGEWAVIVPFRSLDVAKSRLAVSCRRDLALAFLQDTLAALTLSNHISSVIVVSRNAALSETIGTPVIKDQGSGIDDAVEIGHRWLREHGHDGHYSVVMPDLPALRTGDIDNFLSAASRFPRAFVADSAGTGTTCLTTQQAAILSAFGRNSAQRHTRMGYKQIPLGLPSLRLDVDTIDDLERAARMGVGRHTQRLLISNNELHSLRFPCAPG.

3 residues coordinate phosphoenolpyruvate: threonine 135, glycine 150, and serine 153.

It belongs to the CofC family.

The catalysed reaction is phosphoenolpyruvate + GTP + H(+) = enolpyruvoyl-2-diphospho-5'-guanosine + diphosphate. The protein operates within cofactor biosynthesis; coenzyme F420 biosynthesis. Functionally, guanylyltransferase that catalyzes the activation of phosphoenolpyruvate (PEP) as enolpyruvoyl-2-diphospho-5'-guanosine, via the condensation of PEP with GTP. It is involved in the biosynthesis of coenzyme F420, a hydride carrier cofactor. In Rhodococcus jostii (strain RHA1), this protein is Phosphoenolpyruvate guanylyltransferase 2.